Reading from the N-terminus, the 122-residue chain is Large ribosomal subunit protein bL12 (122 aa).

It belongs to the bacterial ribosomal protein bL12 family. As to quaternary structure, homodimer. Part of the ribosomal stalk of the 50S ribosomal subunit. Forms a multimeric L10(L12)X complex, where L10 forms an elongated spine to which 2 to 4 L12 dimers bind in a sequential fashion. Binds GTP-bound translation factors.

Forms part of the ribosomal stalk which helps the ribosome interact with GTP-bound translation factors. Is thus essential for accurate translation. The protein is Large ribosomal subunit protein bL12 of Xylella fastidiosa (strain M12).